The sequence spans 428 residues: Cyclic AMP-responsive element-binding protein 3-like protein 3-A (428 aa).

At 1–286 (MENYSDQGGD…VMNGSNKPVQ (286 aa)) the chain is on the cytoplasmic side. The span at 67-83 (VSGSPVWSPSPSDSGIS) shows a compositional bias: low complexity. A disordered region spans residues 67-104 (VSGSPVWSPSPSDSGISEDPHSDHIDSPPPNASPPMEP). The segment covering 93 to 103 (SPPPNASPPME) has biased composition (pro residues). The bZIP domain occupies 210 to 273 (ILKKIRRKIR…ISLMEQLRRL (64 aa)). The tract at residues 212–241 (KKIRRKIRNKQSAQESRKKKKEYIDGLESR) is basic motif. The segment at 252–273 (LQRKVFQLEKCNISLMEQLRRL) is leucine-zipper. The chain crosses the membrane as a helical; Signal-anchor for type II membrane protein span at residues 287-303 (AGTCVLVLLLSFTLILL). Topologically, residues 304-428 (PNLKPFTDTK…SRRSPHADDM (125 aa)) are lumenal. The interval 381 to 428 (TEYDPESHNHSFDQHDEHHHGDPITGHVATVTLNPRRGSRRSPHADDM) is disordered. The segment covering 385-402 (PESHNHSFDQHDEHHHGD) has biased composition (basic and acidic residues). Residue N389 is glycosylated (N-linked (GlcNAc...) asparagine).

It belongs to the bZIP family. ATF subfamily. As to quaternary structure, binds DNA as a dimer. Post-translationally, controlled by regulated intramembrane proteolysis (RIP). A fragment containing the cytoplasmic transcription factor domain is released by proteolysis. The cleavage seems to be performed sequentially by site-1 and site-2 proteases.

It is found in the endoplasmic reticulum membrane. The protein localises to the nucleus. Transcriptional activator. Binds the cAMP response element (CRE). Activates transcription through box-B element and CRE. Seems to function synergistically with atf6. Regulates FGF21 transcription. The sequence is that of Cyclic AMP-responsive element-binding protein 3-like protein 3-A (creb3l3a) from Danio rerio (Zebrafish).